The primary structure comprises 53 residues: uncharacterized protein (53 aa).

A helical membrane pass occupies residues 13 to 35; sequence FLLHSFTFPIAHCPSFSWASFFF.

The protein resides in the membrane. This is an uncharacterized protein from Saccharomyces cerevisiae (strain ATCC 204508 / S288c) (Baker's yeast).